The chain runs to 773 residues: DC-STAMP domain-containing protein 2 (773 aa).

The Cytoplasmic portion of the chain corresponds to 1-26 (MPKVMKDVVHPLGGEEPSMARAVVRS). The helical transmembrane segment at 27 to 47 (VGGFTLGLSLATAYGLLELLV) threads the bilayer. Residues 48–51 (EGHS) lie on the Extracellular side of the membrane. The helical transmembrane segment at 52–72 (PWGCLVGTLTLAAFLSLGMGF) threads the bilayer. At 73–233 (SRQVRATVLL…IPQAYHLCYV (161 aa)) the chain is on the cytoplasmic side. Residues 234–254 (LMPFKLALCGLASLVQVFCVI) form a helical membrane-spanning segment. Topologically, residues 255–322 (PKYIQPFLRQ…SMKLHRVREA (68 aa)) are extracellular. Residues Asn-284 and Asn-296 are each glycosylated (N-linked (GlcNAc...) asparagine). A helical membrane pass occupies residues 323 to 343 (LALMGFTTPLLLVLLYLQALF). Residues 344–415 (YRYCYLNWDH…ILETFNLIRH (72 aa)) lie on the Cytoplasmic side of the membrane. Residues 416 to 436 (LLLVLFLVFLDYAVFWVLDLA) traverse the membrane as a helical segment. Residues 437 to 499 (RHQLQGEIVA…LRPSEPDSTG (63 aa)) lie on the Extracellular side of the membrane. Asn-480 is a glycosylation site (N-linked (GlcNAc...) asparagine). Residues 500–520 (YIVIGVMYGLCFFITLFGSYV) traverse the membrane as a helical segment. Over 521-773 (SRLRRVICAS…LPDPSHPPPK (253 aa)) the chain is Cytoplasmic. Residues 692–701 (SLSMESTSES) are compositionally biased toward low complexity. Residues 692–773 (SLSMESTSES…LPDPSHPPPK (82 aa)) form a disordered region. Pro residues predominate over residues 758–773 (PLSPPSLPDPSHPPPK).

In terms of assembly, interacts with DCST1.

It is found in the cytoplasmic vesicle. Its subcellular location is the secretory vesicle. The protein resides in the acrosome membrane. Its function is as follows. Essential sperm cell-surface protein required for sperm-egg fusion and fertilization. In Homo sapiens (Human), this protein is DC-STAMP domain-containing protein 2 (DCST2).